Reading from the N-terminus, the 176-residue chain is Non-specific lipid transfer protein GPI-anchored 12 (176 aa).

A signal peptide spans 1-20; that stretch reads MLTTNTLAVLLLLFLSLCSG. 4 disulfides stabilise this stretch: Cys40–Cys83, Cys50–Cys67, Cys68–Cys110, and Cys81–Cys120. Residue Asn46 is glycosylated (N-linked (GlcNAc...) asparagine). A lipid anchor (GPI-anchor amidated asparagine) is attached at Asn149. The propeptide at 150 to 176 is removed in mature form; that stretch reads GAMTTKYCGVALNSLALLLLFTFLSLS.

Belongs to the plant LTP family. As to expression, preferentially expressed in the endodermis of hypocotyls and roots of seedlings, and in petals and anthers of inflorescences. May also be expressed in siliques, carpels and pedicels.

Its subcellular location is the cell membrane. Probable lipid transfer protein. The protein is Non-specific lipid transfer protein GPI-anchored 12 of Arabidopsis thaliana (Mouse-ear cress).